We begin with the raw amino-acid sequence, 124 residues long: Large ribosomal subunit protein bL19 (124 aa).

The protein belongs to the bacterial ribosomal protein bL19 family.

Functionally, this protein is located at the 30S-50S ribosomal subunit interface and may play a role in the structure and function of the aminoacyl-tRNA binding site. The polypeptide is Large ribosomal subunit protein bL19 (Zymomonas mobilis subsp. mobilis (strain ATCC 31821 / ZM4 / CP4)).